Consider the following 517-residue polypeptide: 2-isopropylmalate synthase (517 aa).

The 263-residue stretch at 4 to 266 (INFFDTTLRD…ESTIQLNEIK (263 aa)) folds into the Pyruvate carboxyltransferase domain. Residues aspartate 13, histidine 201, histidine 203, and asparagine 237 each contribute to the Mn(2+) site. Residues 391–517 (EFESLQVHYG…IEIEKHHAIS (127 aa)) form a regulatory domain region.

It belongs to the alpha-IPM synthase/homocitrate synthase family. LeuA type 1 subfamily. In terms of assembly, homodimer. Requires Mn(2+) as cofactor.

It is found in the cytoplasm. It carries out the reaction 3-methyl-2-oxobutanoate + acetyl-CoA + H2O = (2S)-2-isopropylmalate + CoA + H(+). The protein operates within amino-acid biosynthesis; L-leucine biosynthesis; L-leucine from 3-methyl-2-oxobutanoate: step 1/4. Functionally, catalyzes the condensation of the acetyl group of acetyl-CoA with 3-methyl-2-oxobutanoate (2-ketoisovalerate) to form 3-carboxy-3-hydroxy-4-methylpentanoate (2-isopropylmalate). In Bacillus pumilus (strain SAFR-032), this protein is 2-isopropylmalate synthase.